Reading from the N-terminus, the 1488-residue chain is Chromosome partition protein MukB (1488 aa).

Residue 34 to 41 (GGNGAGKS) participates in ATP binding. Coiled-coil stretches lie at residues 326–418 (LEAD…QYNQ), 444–472 (LDTFQAKEQEATEKLLSLEQKMSVAQTAH), and 509–602 (RHLA…QRAP). A flexible hinge region spans residues 666 to 783 (PGGAEDQRLN…SLPIFGRAAR (118 aa)). Coiled-coil stretches lie at residues 835-923 (EAEI…AKLE), 977-1116 (EMLS…AKAG), and 1209-1265 (VEAI…LQSV). Positions 1049–1074 (ADSGAEERARQRRDELHAQLSNNRSR) are disordered. Positions 1051–1065 (SGAEERARQRRDELH) are enriched in basic and acidic residues.

The protein belongs to the SMC family. MukB subfamily. As to quaternary structure, homodimerization via its hinge domain. Binds to DNA via its C-terminal region. Interacts, and probably forms a ternary complex, with MukE and MukF via its C-terminal region. The complex formation is stimulated by calcium or magnesium. Interacts with tubulin-related protein FtsZ.

Its subcellular location is the cytoplasm. The protein localises to the nucleoid. In terms of biological role, plays a central role in chromosome condensation, segregation and cell cycle progression. Functions as a homodimer, which is essential for chromosome partition. Involved in negative DNA supercoiling in vivo, and by this means organize and compact chromosomes. May achieve or facilitate chromosome segregation by condensation DNA from both sides of a centrally located replisome during cell division. This Salmonella arizonae (strain ATCC BAA-731 / CDC346-86 / RSK2980) protein is Chromosome partition protein MukB.